The chain runs to 182 residues: MYSSRILKYEGRSKFGSSCARILRAKSEIPAVVYGKESDVLHIKINSNEFDKKFAKFTDNTVLLLNDGMVEKCVFIKDVSENLTKKFIYHIDFYEVDRTREIERDISIKFIGASVGVKEGGTLSVLRNTVKVKALPLNLPEFVEVDLTPVKKGDQITLKDIVLSDNVKLSETDENLAVLFVK.

Belongs to the bacterial ribosomal protein bL25 family. CTC subfamily. Part of the 50S ribosomal subunit; part of the 5S rRNA/L5/L18/L25 subcomplex. Contacts the 5S rRNA. Binds to the 5S rRNA independently of L5 and L18.

In terms of biological role, this is one of the proteins that binds to the 5S RNA in the ribosome where it forms part of the central protuberance. The polypeptide is Large ribosomal subunit protein bL25 (Borrelia duttonii (strain Ly)).